A 268-amino-acid polypeptide reads, in one-letter code: Gene 65 protein (268 aa).

The protein is Gene 65 protein (65) of Mycobacterium (Mycobacteriophage L5).